The sequence spans 376 residues: Phytanoyl-CoA hydroxylase-interacting protein-like (376 aa).

The Fibronectin type-III domain maps to 52–161 (VPHNIKISNI…EIIEFCTADY (110 aa)).

This sequence belongs to the PHYHIP family.

May play a role in the development of the central system. The polypeptide is Phytanoyl-CoA hydroxylase-interacting protein-like (phyhipl) (Xenopus laevis (African clawed frog)).